Reading from the N-terminus, the 347-residue chain is GTPase Obg (347 aa).

Positions Met1–Leu159 constitute an Obg domain. The interval Gly124–Gly144 is disordered. Residues Ala160–Gly327 enclose the OBG-type G domain. Residues Gly166–Ser173, Phe191–His195, Asp212–Gly215, Asn279–Asp282, and Ser308–Ala310 contribute to the GTP site. Positions 173 and 193 each coordinate Mg(2+).

It belongs to the TRAFAC class OBG-HflX-like GTPase superfamily. OBG GTPase family. As to quaternary structure, monomer. The cofactor is Mg(2+).

It localises to the cytoplasm. Its function is as follows. An essential GTPase which binds GTP, GDP and possibly (p)ppGpp with moderate affinity, with high nucleotide exchange rates and a fairly low GTP hydrolysis rate. Plays a role in control of the cell cycle, stress response, ribosome biogenesis and in those bacteria that undergo differentiation, in morphogenesis control. This chain is GTPase Obg, found in Zymomonas mobilis subsp. mobilis (strain ATCC 31821 / ZM4 / CP4).